A 256-amino-acid polypeptide reads, in one-letter code: D-aminoacyl-tRNA deacylase (256 aa).

The protein belongs to the DtdA deacylase family. In terms of assembly, monomer. Zn(2+) is required as a cofactor.

The enzyme catalyses a D-aminoacyl-tRNA + H2O = a tRNA + a D-alpha-amino acid + H(+). The catalysed reaction is glycyl-tRNA(Ala) + H2O = tRNA(Ala) + glycine + H(+). Its function is as follows. D-aminoacyl-tRNA deacylase with broad substrate specificity. By recycling D-aminoacyl-tRNA to D-amino acids and free tRNA molecules, this enzyme counteracts the toxicity associated with the formation of D-aminoacyl-tRNA entities in vivo. This is D-aminoacyl-tRNA deacylase from Thermoplasma volcanium (strain ATCC 51530 / DSM 4299 / JCM 9571 / NBRC 15438 / GSS1).